The following is a 285-amino-acid chain: Sulfotransferase 2A1 (285 aa).

Lysine 44, serine 45, glycine 46, threonine 47, asparagine 48, and tryptophan 49 together coordinate 3'-phosphoadenylyl sulfate. Histidine 99 functions as the Proton acceptor in the catalytic mechanism. 3'-phosphoadenylyl sulfate contacts are provided by arginine 121, serine 129, tyrosine 184, serine 218, methionine 223, arginine 247, lysine 248, and glycine 249.

This sequence belongs to the sulfotransferase 1 family. As to quaternary structure, homodimer. Highly expressed in liver.

It localises to the cytoplasm. It catalyses the reaction an alcohol + 3'-phosphoadenylyl sulfate = an alkyl sulfate + adenosine 3',5'-bisphosphate + H(+). The catalysed reaction is taurolithocholate + 3'-phosphoadenylyl sulfate = taurolithocholate 3-sulfate + adenosine 3',5'-bisphosphate + H(+). The enzyme catalyses pregnenolone + 3'-phosphoadenylyl sulfate = pregnenolone sulfate + adenosine 3',5'-bisphosphate + H(+). It carries out the reaction 3beta-hydroxyandrost-5-en-17-one + 3'-phosphoadenylyl sulfate = dehydroepiandrosterone 3-sulfate + adenosine 3',5'-bisphosphate + H(+). It catalyses the reaction lithocholate + 3'-phosphoadenylyl sulfate = lithocholate sulfate + adenosine 3',5'-bisphosphate + H(+). The catalysed reaction is (24S)-hydroxycholesterol + 3'-phosphoadenylyl sulfate = (24S)-hydroxycholesterol 24-sulfate + adenosine 3',5'-bisphosphate + H(+). The enzyme catalyses (24S)-hydroxycholesterol + 3'-phosphoadenylyl sulfate = (24S)-hydroxycholesterol 3-sulfate + adenosine 3',5'-bisphosphate + H(+). It carries out the reaction (24S)-hydroxycholesterol 24-sulfate + 3'-phosphoadenylyl sulfate = (24S)-hydroxycholesterol 3,24-disulfate + adenosine 3',5'-bisphosphate + H(+). It catalyses the reaction androsterone + 3'-phosphoadenylyl sulfate = androsterone 3alpha-sulfate + adenosine 3',5'-bisphosphate + H(+). Its function is as follows. Sulfotransferase that utilizes 3'-phospho-5'-adenylyl sulfate (PAPS) as sulfonate donor to catalyze the sulfonation of steroids and bile acids in the liver and adrenal glands. Mediates the sulfation of a wide range of steroids and sterols, including pregnenolone, androsterone, DHEA, bile acids, cholesterol and as well many xenobiotics that contain alcohol and phenol functional groups. Sulfonation increases the water solubility of most compounds, and therefore their renal excretion, but it can also result in bioactivation to form active metabolites. Plays an important role in maintening steroid and lipid homeostasis. Plays a key role in bile acid metabolism. In addition, catalyzes the metabolic activation of potent carcinogenic polycyclic arylmethanols. This is Sulfotransferase 2A1 (Sult2a1) from Mus musculus (Mouse).